The following is a 200-amino-acid chain: Large ribosomal subunit protein uL22c (200 aa).

This sequence belongs to the universal ribosomal protein uL22 family. In terms of assembly, part of the 50S ribosomal subunit.

It localises to the plastid. It is found in the chloroplast. In terms of biological role, this protein binds specifically to 23S rRNA. Functionally, the globular domain of the protein is located near the polypeptide exit tunnel on the outside of the subunit, while an extended beta-hairpin is found that lines the wall of the exit tunnel in the center of the 70S ribosome. The polypeptide is Large ribosomal subunit protein uL22c (rpl22) (Medicago sativa (Alfalfa)).